A 651-amino-acid chain; its full sequence is MKILLVEDDDVLIKVLTKNLTTHHYIVDVVKDGEMGWTYGSTFEYDLIILDIMLPNLDGISLCKRFRAQGYTVPILLLTAQDNITAKVQGLDAGADDYVVKPFDPIELIARIRALLRRGSNNPFPLLTWGDLLLNPSTCEVTYNGCPLNLTTMEYDLLELLLRNCQHVFSSEELLDKLWSSEDFPSEATVRSHVRRLRHKLVAAGAPHDFIATMHGRGYYLKAPSTEEVNNLSVTPENNSHSAAVIVKSRETESDRPQHLIPSDSQQQYLAFLNETWTRTKPQSLDQMGILLQIVRDLQTNQLTPQQQTQAQHVAHKLAGTLGIFGLTKTMHIARQLEYWLGGRERLQPKHAPLMKTLVTALQQDIDHTTLIQLSQIPAGQSPLLLMISADNEFNQSIVAVAASRGIRIQIAPTPDIAPAMLTNEPVLDGFGEDPDVILMRLPSMPSRAEVIEQPNSELSNIWKTLQTFAERYPKLPIVVIGDRGEMSDRLEAMRRGGKLFLVTPTPPEQIVDTVVNLLRDPEIPNKVMILDDDQDWLRTLPTLLKPWGFKVTTLADPQQFWTVLQAVTPDALVLDVNMPQINGFELCQLLRSDPHWQRLPVLFLSVLTDPTTQNQAFAVGGDDYLCKPVKGVELANRILRRLQRVRAWAN.

The Response regulatory 1 domain occupies 2–116 (KILLVEDDDV…ELIARIRALL (115 aa)). Aspartate 51 carries the post-translational modification 4-aspartylphosphate. The segment at residues 124–223 (FPLLTWGDLL…MHGRGYYLKA (100 aa)) is a DNA-binding region (ompR/PhoB-type). Response regulatory domains are found at residues 384-519 (LLLM…VNLL) and 527-643 (KVMI…LRRL).

Required for chromatic adaptation. Thought to be a positive regulator of phycobiliproteins. In Microchaete diplosiphon (Fremyella diplosiphon), this protein is Protein RcaC (rcaC).